Reading from the N-terminus, the 122-residue chain is Holo-[acyl-carrier-protein] synthase (122 aa).

2 residues coordinate Mg(2+): Asp8 and Glu55.

Belongs to the P-Pant transferase superfamily. AcpS family. Mg(2+) is required as a cofactor.

It is found in the cytoplasm. It catalyses the reaction apo-[ACP] + CoA = holo-[ACP] + adenosine 3',5'-bisphosphate + H(+). Functionally, transfers the 4'-phosphopantetheine moiety from coenzyme A to a Ser of acyl-carrier-protein. The polypeptide is Holo-[acyl-carrier-protein] synthase (Fusobacterium nucleatum subsp. nucleatum (strain ATCC 25586 / DSM 15643 / BCRC 10681 / CIP 101130 / JCM 8532 / KCTC 2640 / LMG 13131 / VPI 4355)).